The chain runs to 188 residues: Adenine phosphoribosyltransferase (188 aa).

It belongs to the purine/pyrimidine phosphoribosyltransferase family. As to quaternary structure, homodimer.

The protein resides in the cytoplasm. It catalyses the reaction AMP + diphosphate = 5-phospho-alpha-D-ribose 1-diphosphate + adenine. It participates in purine metabolism; AMP biosynthesis via salvage pathway; AMP from adenine: step 1/1. In terms of biological role, catalyzes a salvage reaction resulting in the formation of AMP, that is energically less costly than de novo synthesis. The sequence is that of Adenine phosphoribosyltransferase from Paraburkholderia xenovorans (strain LB400).